The primary structure comprises 228 residues: 2,3-bisphosphoglycerate-dependent phosphoglycerate mutase (228 aa).

Substrate is bound by residues 8–15 (RHGQSEWN), 21–22 (TG), Arg60, 87–90 (ERHY), Lys98, 114–115 (RR), and 183–184 (GN). Catalysis depends on His9, which acts as the Tele-phosphohistidine intermediate. Glu87 serves as the catalytic Proton donor/acceptor.

It belongs to the phosphoglycerate mutase family. BPG-dependent PGAM subfamily.

It carries out the reaction (2R)-2-phosphoglycerate = (2R)-3-phosphoglycerate. It participates in carbohydrate degradation; glycolysis; pyruvate from D-glyceraldehyde 3-phosphate: step 3/5. Functionally, catalyzes the interconversion of 2-phosphoglycerate and 3-phosphoglycerate. The polypeptide is 2,3-bisphosphoglycerate-dependent phosphoglycerate mutase (Staphylococcus epidermidis (strain ATCC 12228 / FDA PCI 1200)).